The chain runs to 678 residues: Alpha-L-arabinofuranosidase 1 (678 aa).

A signal peptide spans 1–33 (MDMESWKLLRSVCVLSFLLGSCFVYQSLRVVDA). The region spanning 152–239 (NIEEGKKYKV…WIDQVSAMPV (88 aa)) is the CBM-cenC domain. Residues Asn181, Asn362, Asn523, and Asn555 are each glycosylated (N-linked (GlcNAc...) asparagine).

It belongs to the glycosyl hydrolase 51 family. Expressed in roots, leaves, flowers, stems, siliques and seedlings. Observed in zones of cell proliferation, the vascular system and floral abscission zones. Expressed in the guard cells in stems, in xylem vessels and parenchyma cells surrounding the vessels, in the cambium and in the phloem, but not in the secondary xylem.

The protein localises to the secreted. Its subcellular location is the extracellular space. The protein resides in the extracellular matrix. It carries out the reaction Hydrolysis of terminal non-reducing alpha-L-arabinofuranoside residues in alpha-L-arabinosides.. Functionally, may be involved in the coordinated dissolution of the cell wall matrix during abscission and in the secondary cell wall formation in xylem vessels. Prefers arabinoxylan, but may also use pectic arabinans as substrates. In Arabidopsis thaliana (Mouse-ear cress), this protein is Alpha-L-arabinofuranosidase 1 (ASD1).